A 155-amino-acid chain; its full sequence is Small ribosomal subunit protein uS7 (155 aa).

This sequence belongs to the universal ribosomal protein uS7 family. In terms of assembly, part of the 30S ribosomal subunit. Contacts proteins S9 and S11.

In terms of biological role, one of the primary rRNA binding proteins, it binds directly to 16S rRNA where it nucleates assembly of the head domain of the 30S subunit. Is located at the subunit interface close to the decoding center, probably blocks exit of the E-site tRNA. In Mycoplasmoides gallisepticum (strain R(low / passage 15 / clone 2)) (Mycoplasma gallisepticum), this protein is Small ribosomal subunit protein uS7.